A 352-amino-acid chain; its full sequence is Dysbindin (352 aa).

Position 11 is a phosphoserine (Ser-11). The stretch at 88–176 (EKKRTSLNEL…EAFKAELDTE (89 aa)) forms a coiled coil. The dysbindin stretch occupies residues 173-325 (LDTEHTQKAL…DEEEVQVDTA (153 aa)). Positions 243 to 256 (LMDISDQEALDVFL) match the Nuclear export signal motif. The segment at 267 to 352 (SPGVEMESNP…SDQCDSTQDI (86 aa)) is disordered. Residues 274 to 285 (SNPNQNEMSLQI) are compositionally biased toward polar residues. Residues 286–301 (PSPSESASQPPASPSA) are compositionally biased toward low complexity. 3 positions are modified to phosphoserine: Ser-315, Ser-340, and Ser-343.

It belongs to the dysbindin family. In terms of assembly, interacts with AP3M1 and TRIM32. Interacts (isoform 1 and isoform 2 only) with the DNA-dependent protein kinase complex DNA-PK; the interaction phosphorylates DTNBP1 in vitro. Interacts directly in this complex with XRCC5 and XRCC6. Interacts with XPO1; the interaction exports DTNBP1 out of the nucleus. Component of the biogenesis of lysosome-related organelles complex 1 (BLOC-1) composed of BLOC1S1, BLOC1S2, BLOC1S3, BLOC1S4, BLOC1S5, BLOC1S6, DTNBP1/BLOC1S7 and SNAPIN/BLOC1S8. The BLOC-1 complex associates with the AP-3 protein complex and membrane protein cargos. This BLOC-1 complex also associates with the BLOC-2 complex in endosomes. Binds to DTNA and DTNB but may not be a physiological binding partner. Interacts (via its coiled coil domain) with KXD1. Interacts with AP3B2, BLOC1S5, BLOC1S6, CMYA5, PI4K2, RNF151 and SNAPIN/BLOC1S8. Interacts with XPO1; the interaction exports DTNBP1 out of the nucleus. Post-translationally, ubiquitinated by TRIM32. Ubiquitination leads to DTNBP1 degradation. Detected in brain, in hippocampus and dentate gyrus neurons. Detected at axon bundles and axon terminals, notably in the cerebellum and hippocampus. Detected in neuropil in hippocampus, lateral septum, basal ganglia and substantia nigra. Highly expressed in pyramidal cells of hippocampus CA2 and CA3. Detected at the heart and skeletal muscle sarcolemma (at protein level). Ubiquitously expressed. The highest expression is observed in testis, liver, kidney, brain, heart and lung. Expressed at lower levels in stomach and small intestine.

It is found in the cytoplasm. The protein resides in the cytoplasmic vesicle membrane. The protein localises to the endosome membrane. It localises to the melanosome membrane. Its subcellular location is the postsynaptic density. It is found in the endoplasmic reticulum. The protein resides in the nucleus. The protein localises to the cytoplasmic vesicle. It localises to the secretory vesicle. Its subcellular location is the synaptic vesicle membrane. It is found in the postsynaptic cell membrane. In terms of biological role, component of the BLOC-1 complex, a complex that is required for normal biogenesis of lysosome-related organelles (LRO), such as platelet dense granules and melanosomes. In concert with the AP-3 complex, the BLOC-1 complex is required to target membrane protein cargos into vesicles assembled at cell bodies for delivery into neurites and nerve terminals. The BLOC-1 complex, in association with SNARE proteins, is also proposed to be involved in neurite extension. Associates with the BLOC-2 complex to facilitate the transport of TYRP1 independent of AP-3 function. Plays a role in synaptic vesicle trafficking and in neurotransmitter release. Plays a role in the regulation of cell surface exposure of DRD2. May play a role in actin cytoskeleton reorganization and neurite outgrowth. May modulate MAPK8 phosphorylation. Appears to promote neuronal transmission and viability through regulating the expression of SNAP25 and SYN1, modulating PI3-kinase-Akt signaling and influencing glutamatergic release. Regulates the expression of SYN1 through binding to its promoter. Modulates prefrontal cortical activity via the dopamine/D2 pathway. This Mus musculus (Mouse) protein is Dysbindin (Dtnbp1).